A 686-amino-acid polypeptide reads, in one-letter code: MTFSPQRPEFETGKQPDPETEHAGDFFEETSSSAPRAASNGSSGPNYTLITTFLAALTAGIFAFWAGWTRKWISDDGLIVLRTVRNLLAGNGPVFNAGERVEANTSTLWQYCIYLVALVTDYRLEDIALWLALLFTTAASIIGVLGTAHLHRKRIAVLLPAGVIGYFSLSPARDFATSGLEWGLSLMWISIQWLLLVLWATSGKTSGKKASGAKTSNPIVNAGAITYALAFWSGLSWLVRPELAMYGGLTGVLLLLTAPRWRVVLGILVAALPLPAAYQIFRMGYYGLMVPHTAVAKSASDAVWGTGWEYVEDFTGPYNLWLGLALLLAAGALTVWKTDKHLAIPKGRLGLRTPGMAIALLVICALVHFLYVIRVGGDFMHGRMLLLPLFAILLPVSVIPVNVVDRGWQDLVALVLVFSTWVWSTVVFVQGHQWENTGQHVVDERDFWIDFTNRDEDHPPLYAEDFLTVDSMNDYAEVMRDQTLVNPTGQQLNILASSDPTTYSWITTPRVEGVEAGDLANLSPTVFHVNLGMTSMNAPLNVRVTDLIGLATPLAARQPRIEGGRIGHDKLMDLEWQVAESATPLAYTPGWLDTQKTYEARQALRHPELVHLFQTYREPMSYHRFVDNIKYALTTGRTLEISDNPEDLLKEFNPTPAEIQDGLETIAWPGEIKLDEPRGEPLYSSQ.

Positions 1-42 (MTFSPQRPEFETGKQPDPETEHAGDFFEETSSSAPRAASNGS) are disordered. Basic and acidic residues predominate over residues 8–25 (PEFETGKQPDPETEHAGD). Residues 29–42 (ETSSSAPRAASNGS) show a composition bias toward polar residues. 10 consecutive transmembrane segments (helical) span residues 48–68 (TLITTFLAALTAGIFAFWAGW), 127–147 (IALWLALLFTTAASIIGVLGT), 155–175 (IAVLLPAGVIGYFSLSPARDF), 180–200 (LEWGLSLMWISIQWLLLVLWA), 219–239 (IVNAGAITYALAFWSGLSWLV), 261–281 (WRVVLGILVAALPLPAAYQIF), 316–336 (GPYNLWLGLALLLAAGALTVW), 353–373 (TPGMAIALLVICALVHFLYVI), 384–404 (MLLLPLFAILLPVSVIPVNVV), and 411–431 (LVALVLVFSTWVWSTVVFVQG).

This sequence belongs to the AftB family.

Its subcellular location is the membrane. It participates in cell wall biogenesis; cell wall polysaccharide biosynthesis. Involved in the biosynthesis of the arabinogalactan (AG) region of the mycolylarabinogalactan-peptidoglycan (mAGP) complex, an essential component of the cell wall. Catalyzes the transfer of arabinofuranosyl (Araf) residues from the sugar donor decaprenyl-phospho-arabinose (DPA) to the arabinan domain to form terminal beta-(1-&gt;2)-linked Araf residues, which marks the end point for AG arabinan biosynthesis before decoration with mycolic acids. This chain is Terminal beta-(1-&gt;2)-arabinofuranosyltransferase (aftB), found in Corynebacterium glutamicum (strain ATCC 13032 / DSM 20300 / JCM 1318 / BCRC 11384 / CCUG 27702 / LMG 3730 / NBRC 12168 / NCIMB 10025 / NRRL B-2784 / 534).